The sequence spans 306 residues: D-alanine--D-alanine ligase (306 aa).

One can recognise an ATP-grasp domain in the interval 104 to 303 (KMLWKAFGLP…FEQLVVKILE (200 aa)). 134-189 (VAKLGLPLMVKPSLEGSSVGLTKVKAVEELKSAVEYALKFDNTILIEEWLAGDELT) lines the ATP pocket. Positions 257, 270, and 272 each coordinate Mg(2+).

It belongs to the D-alanine--D-alanine ligase family. The cofactor is Mg(2+). Mn(2+) is required as a cofactor.

It is found in the cytoplasm. The catalysed reaction is 2 D-alanine + ATP = D-alanyl-D-alanine + ADP + phosphate + H(+). It participates in cell wall biogenesis; peptidoglycan biosynthesis. Its function is as follows. Cell wall formation. This Haemophilus influenzae (strain PittGG) protein is D-alanine--D-alanine ligase.